A 587-amino-acid polypeptide reads, in one-letter code: Arginine--tRNA ligase (587 aa).

Positions 123–133 (ANVAKPLHVGH) match the 'HIGH' region motif.

Belongs to the class-I aminoacyl-tRNA synthetase family. In terms of assembly, monomer.

The protein localises to the cytoplasm. The enzyme catalyses tRNA(Arg) + L-arginine + ATP = L-arginyl-tRNA(Arg) + AMP + diphosphate. The protein is Arginine--tRNA ligase of Alkaliphilus oremlandii (strain OhILAs) (Clostridium oremlandii (strain OhILAs)).